A 614-amino-acid chain; its full sequence is V-type proton ATPase catalytic subunit A isoform 1 (614 aa).

Residue 247–254 (GAFGCGKT) participates in ATP binding.

This sequence belongs to the ATPase alpha/beta chains family. In terms of assembly, V-ATPase is a heteromultimeric enzyme made up of two complexes: the ATP-hydrolytic V1 complex and the proton translocation V0 complex. The V1 complex consists of three catalytic AB heterodimers that form a heterohexamer, three peripheral stalks each consisting of EG heterodimers, one central rotor including subunits D and F, and the regulatory subunits C and H. The proton translocation complex V0 consists of the proton transport subunit a, a ring of proteolipid subunits c9c'', rotary subunit d, subunits e and f, and the accessory subunits VhaAC45 and ATP6AP2.

The enzyme catalyses ATP + H2O + 4 H(+)(in) = ADP + phosphate + 5 H(+)(out). With respect to regulation, ATP hydrolysis occurs at the interface between the nucleotide-binding domains of subunits A and B. ATP hydrolysis triggers a conformational change in the subunits D and F, which induces a shift of subunit d. The c-ring is subsequently rotated and results in a continuous proton translocation across the membrane. In terms of biological role, catalytic subunit of the V1 complex of vacuolar(H+)-ATPase (V-ATPase), a multisubunit enzyme composed of a peripheral complex (V1) that hydrolyzes ATP and a membrane integral complex (V0) that translocates protons. V-ATPase is responsible for acidifying and maintaining the pH of intracellular compartments and in some cell types, is targeted to the plasma membrane, where it is responsible for acidifying the extracellular environment. The sequence is that of V-type proton ATPase catalytic subunit A isoform 1 (Vha68-1) from Drosophila melanogaster (Fruit fly).